The chain runs to 79 residues: Delta-hormotoxin-Cpt1a (79 aa).

The signal sequence occupies residues 1 to 20 (MKTQVLAVFVLCVLFCLAES). Residues 21–31 (RTTLNKRIDIA) constitute a propeptide that is removed on maturation. 3 disulfides stabilise this stretch: Cys36/Cys75, Cys38/Cys66, and Cys56/Cys76.

The protein belongs to the sea anemone sodium channel inhibitory toxin family.

Its subcellular location is the secreted. The protein resides in the nematocyst. Its function is as follows. In neuromuscular preparation of crustaceans, the toxin increased neurotransmitter release, causing repetitive firing of the axons. May affect sodium channels (Nav). This Calliactis parasitica (Sea anemone) protein is Delta-hormotoxin-Cpt1a.